The sequence spans 570 residues: MSEKHPGPLVVEGKLTDAERMKLESNYLRGTIAEDLNDGLTGGFKGDNFLLIRFHGMYQQDDRDIRAERAEQKLEPRHAMLLRCRLPGGVITTKQWQAIDKFAGENTIYGSIRLTNRQTFQFHGILKKNVKPVHQMLHSVGLDALATANDMNRNVLCTSNPYESQLHAEAYEWAKKISEHLLPRTRAYAEIWLDQEKVATTDEEPILGQTYLPRKFKTTVVIPPQNDIDLHANDMNFVAIAENGKLVGFNLLVGGGLSIEHGNKKTYARTASEFGYLPLEHTLAVAEAVVTTQRDWGNRTDRKNAKTKYTLERVGVETFKAEVERRAGIKFEPIRPYEFTGRGDRIGWVKGIDDNWHLTLFIENGRILDYPGRPLKTGLLEIAKIHKGDFRITANQNLIIAGVPESEKAKIEKIAKESGLMNAVTPQRENSMACVSFPTCPLAMAEAERFLPSFIDNIDNLMAKHGVSDEHIVMRVTGCPNGCGRAMLAEVGLVGKAPGRYNLHLGGNRMGTRIPRMYKENITEPEILASLDELIGRWAKEREAGEGFGDFTVRAGIIRPVLDPARDLWD.

Positions 434, 440, 479, and 483 each coordinate [4Fe-4S] cluster. Cysteine 483 is a siroheme binding site.

The protein belongs to the nitrite and sulfite reductase 4Fe-4S domain family. Alpha(8)-beta(8). The alpha component is a flavoprotein, the beta component is a hemoprotein. The cofactor is siroheme. [4Fe-4S] cluster serves as cofactor.

It carries out the reaction hydrogen sulfide + 3 NADP(+) + 3 H2O = sulfite + 3 NADPH + 4 H(+). The protein operates within sulfur metabolism; hydrogen sulfide biosynthesis; hydrogen sulfide from sulfite (NADPH route): step 1/1. Functionally, component of the sulfite reductase complex that catalyzes the 6-electron reduction of sulfite to sulfide. This is one of several activities required for the biosynthesis of L-cysteine from sulfate. The sequence is that of Sulfite reductase [NADPH] hemoprotein beta-component from Escherichia coli O6:H1 (strain CFT073 / ATCC 700928 / UPEC).